The sequence spans 365 residues: Class I histocompatibility antigen, Gogo-A*0101 alpha chain (365 aa).

The first 24 residues, 1 to 24 (MAVMAPRTLVLLLSGALALTQTWA), serve as a signal peptide directing secretion. Residues 25–114 (GSHSMRYFST…LRGYYNQSED (90 aa)) are alpha-1. Residues 25 to 308 (GSHSMRYFST…EPSSQPTIPI (284 aa)) are Extracellular-facing. N-linked (GlcNAc...) asparagine glycosylation is present at asparagine 110. The segment at 115–206 (GSHTIQRMYG…ENGKETLQRT (92 aa)) is alpha-2. 2 disulfide bridges follow: cysteine 125/cysteine 188 and cysteine 227/cysteine 283. The alpha-3 stretch occupies residues 207–298 (DAPKTHMTHH…GLPEPLTLRW (92 aa)). Residues 209–297 (PKTHMTHHAV…EGLPEPLTLR (89 aa)) enclose the Ig-like C1-type domain. The interval 299–308 (EPSSQPTIPI) is connecting peptide. The chain crosses the membrane as a helical span at residues 309–332 (VGIIAGLVLFGAVIAGAVVAAVRW). Over 333–365 (RRKSSDRKGGSYSQAASSDSAQGSDVSLTACKV) the chain is Cytoplasmic. A disordered region spans residues 338-365 (DRKGGSYSQAASSDSAQGSDVSLTACKV). Residues 342–359 (GSYSQAASSDSAQGSDVS) show a composition bias toward low complexity. Serine 343 carries the phosphoserine modification. The residue at position 344 (tyrosine 344) is a Phosphotyrosine. Serine 345, serine 349, serine 350, serine 352, serine 356, and serine 359 each carry phosphoserine.

This sequence belongs to the MHC class I family. In terms of assembly, heterodimer of an alpha chain and a beta chain (beta-2-microglobulin).

Its subcellular location is the membrane. Its function is as follows. Involved in the presentation of foreign antigens to the immune system. The polypeptide is Class I histocompatibility antigen, Gogo-A*0101 alpha chain (Gorilla gorilla gorilla (Western lowland gorilla)).